The following is a 402-amino-acid chain: Ubiquitin-like modifier-activating enzyme 5 (402 aa).

ATP contacts are provided by Gly81, Asp102, Lys125, Asn148, and Asn182. 2 residues coordinate Zn(2+): Cys224 and Cys227. Cys248 serves as the catalytic Glycyl thioester intermediate. Positions 301 and 306 each coordinate Zn(2+). The segment at 369-402 (EAPEKSSETSEETVTTAPPDDASLEDLMAQMKSM) is disordered.

It belongs to the ubiquitin-activating E1 family. UBA5 subfamily.

Its function is as follows. E1-like enzyme which activates UFM1. This chain is Ubiquitin-like modifier-activating enzyme 5, found in Drosophila erecta (Fruit fly).